Reading from the N-terminus, the 736-residue chain is Alpha-xylosidase A (736 aa).

The N-terminal stretch at 1–18 (MYFSSFLALGALVQAAAA) is a signal peptide. Residues asparagine 24, asparagine 279, asparagine 332, and asparagine 376 are each glycosylated (N-linked (GlcNAc...) asparagine). Aspartate 413 is an active-site residue. Residue asparagine 471 is glycosylated (N-linked (GlcNAc...) asparagine). Aspartate 505 (proton donor) is an active-site residue. N-linked (GlcNAc...) asparagine glycans are attached at residues asparagine 655, asparagine 676, asparagine 690, and asparagine 701.

This sequence belongs to the glycosyl hydrolase 31 family.

The protein localises to the secreted. It carries out the reaction Hydrolysis of terminal, non-reducing alpha-D-xylose residues with release of alpha-D-xylose.. Its function is as follows. Catalyzes the liberation of alpha-xylose from the non-reducing terminal glucose of xyloglucan oligosaccharides. The protein is Alpha-xylosidase A of Aspergillus niger (strain ATCC MYA-4892 / CBS 513.88 / FGSC A1513).